A 433-amino-acid chain; its full sequence is Xylose isomerase (433 aa).

Active-site residues include histidine 97 and aspartate 100. Positions 228, 264, 267, 292, 303, 305, and 334 each coordinate Mg(2+).

This sequence belongs to the xylose isomerase family. In terms of assembly, homotetramer. It depends on Mg(2+) as a cofactor.

It localises to the cytoplasm. It carries out the reaction alpha-D-xylose = alpha-D-xylulofuranose. The chain is Xylose isomerase from Fervidobacterium gondwanense.